A 142-amino-acid chain; its full sequence is 3-hydroxyacyl-[acyl-carrier-protein] dehydratase FabZ (142 aa).

Residue His50 is part of the active site.

The protein belongs to the thioester dehydratase family. FabZ subfamily.

The protein localises to the cytoplasm. It carries out the reaction a (3R)-hydroxyacyl-[ACP] = a (2E)-enoyl-[ACP] + H2O. Functionally, involved in unsaturated fatty acids biosynthesis. Catalyzes the dehydration of short chain beta-hydroxyacyl-ACPs and long chain saturated and unsaturated beta-hydroxyacyl-ACPs. This Clostridium tetani (strain Massachusetts / E88) protein is 3-hydroxyacyl-[acyl-carrier-protein] dehydratase FabZ.